The chain runs to 829 residues: Periplasmic nitrate reductase (829 aa).

A signal peptide (tat-type signal) is located at residues 1–29; sequence MKMTRRAFVKANAAASAAAVAGVTLPATA. Positions 41–97 constitute a 4Fe-4S Mo/W bis-MGD-type domain; sequence ITWDKAPCRFCGTGCSVLVGTQNGKVVATQGDPEAPVNKGLNCIKGYFLSKIMYGKD. [4Fe-4S] cluster-binding residues include Cys-48, Cys-51, Cys-55, and Cys-83. Residues Lys-85, Gln-152, Asn-177, Cys-181, 214-221, 245-249, 264-266, Met-374, Gln-378, Asn-484, 510-511, Lys-533, Asp-560, and 718-727 contribute to the Mo-bis(molybdopterin guanine dinucleotide) site; these read WGSNMAEM, STYYH, QSD, SD, and TGRVLEHWHT. A substrate-binding site is contributed by Phe-794. Mo-bis(molybdopterin guanine dinucleotide) contacts are provided by Asn-802 and Lys-819.

The protein belongs to the prokaryotic molybdopterin-containing oxidoreductase family. NasA/NapA/NarB subfamily. In terms of assembly, component of the periplasmic nitrate reductase NapAB complex composed of NapA and NapB. Requires [4Fe-4S] cluster as cofactor. The cofactor is Mo-bis(molybdopterin guanine dinucleotide). Post-translationally, predicted to be exported by the Tat system. The position of the signal peptide cleavage has not been experimentally proven.

Its subcellular location is the periplasm. The catalysed reaction is 2 Fe(II)-[cytochrome] + nitrate + 2 H(+) = 2 Fe(III)-[cytochrome] + nitrite + H2O. Its function is as follows. Catalytic subunit of the periplasmic nitrate reductase complex NapAB. Receives electrons from NapB and catalyzes the reduction of nitrate to nitrite. The sequence is that of Periplasmic nitrate reductase from Vibrio atlanticus (strain LGP32) (Vibrio splendidus (strain Mel32)).